The primary structure comprises 300 residues: Hemagglutinin 1 (300 aa).

Residues 200–221 traverse the membrane as a helical segment; that stretch reads FIFATVVFIFLQAGRVPEIIAD.

The protein resides in the cell membrane. Functionally, induces agglutination of neuraminidase-treated erythrocytes. This chain is Hemagglutinin 1 (hag1), found in Eikenella corrodens.